Here is a 242-residue protein sequence, read N- to C-terminus: Leucyl/phenylalanyl-tRNA--protein transferase (242 aa).

The protein belongs to the L/F-transferase family.

Its subcellular location is the cytoplasm. The enzyme catalyses N-terminal L-lysyl-[protein] + L-leucyl-tRNA(Leu) = N-terminal L-leucyl-L-lysyl-[protein] + tRNA(Leu) + H(+). The catalysed reaction is N-terminal L-arginyl-[protein] + L-leucyl-tRNA(Leu) = N-terminal L-leucyl-L-arginyl-[protein] + tRNA(Leu) + H(+). It catalyses the reaction L-phenylalanyl-tRNA(Phe) + an N-terminal L-alpha-aminoacyl-[protein] = an N-terminal L-phenylalanyl-L-alpha-aminoacyl-[protein] + tRNA(Phe). Functions in the N-end rule pathway of protein degradation where it conjugates Leu, Phe and, less efficiently, Met from aminoacyl-tRNAs to the N-termini of proteins containing an N-terminal arginine or lysine. This chain is Leucyl/phenylalanyl-tRNA--protein transferase, found in Alcanivorax borkumensis (strain ATCC 700651 / DSM 11573 / NCIMB 13689 / SK2).